A 602-amino-acid chain; its full sequence is Toxin YwqJ (602 aa).

The 235-residue stretch at 1–235 (MSKVFESKSL…TTYIDAKTQQ (235 aa)) folds into the LXG domain. Coiled-coil stretches lie at residues 6–41 (ESKS…VADL) and 227–251 (TYID…EANK).

This sequence in the N-terminal section; belongs to the LXG family. In terms of assembly, probably interacts with cognate immunity protein YwqK but not with non-cognate immunity proteins. The interaction inhibits the toxic activity of YwqJ.

It is found in the secreted. In terms of biological role, toxic component of one of 6 LXG toxin-immunity modules in this strain. They promote kin selection, mediate competition in biofilms, and drive spatial segregation of different strains, indicating that LXG toxins may help avoid warfare between strains in biofilms. Mediates intercellular competition during biofilm formation; disruption of the operon disadvantages the bacteria, but overexpression of the cognate immunity protein restores growth in competition with wild-type. Overexpression alone in situ causes growth arrest but not cell lysis; no effect is seen on DNA or rRNA. Co-overexpression with cognate immunity protein YwqK does not cause growth arrest. The toxic effect is dependent on the epsA and tapA operons which are required for biofilm formation. Its toxic effects are probably neutralized by its cognate immunity protein YwqK, but not by immunity proteins specific to other toxins with the LXG domain. May have deaminase activity. The polypeptide is Toxin YwqJ (ywqJ) (Bacillus subtilis (strain 168)).